The sequence spans 318 residues: DNA polymerase IV (318 aa).

The UmuC domain maps to 6-186 (IIHIDMDAFY…LPLGKIPGVG (181 aa)). Asp10 and Asp104 together coordinate Mg(2+). The active site involves Glu105.

This sequence belongs to the DNA polymerase type-Y family. As to quaternary structure, monomer. It depends on Mg(2+) as a cofactor.

It is found in the cytoplasm. It carries out the reaction DNA(n) + a 2'-deoxyribonucleoside 5'-triphosphate = DNA(n+1) + diphosphate. In terms of biological role, poorly processive, error-prone DNA polymerase involved in untargeted mutagenesis. Copies undamaged DNA at stalled replication forks, which arise in vivo from mismatched or misaligned primer ends. These misaligned primers can be extended by PolIV. Exhibits no 3'-5' exonuclease (proofreading) activity. May be involved in translesional synthesis, in conjunction with the beta clamp from PolIII. The sequence is that of DNA polymerase IV from Neisseria meningitidis serogroup B (strain ATCC BAA-335 / MC58).